Consider the following 121-residue polypeptide: Large ribosomal subunit protein P2 (121 aa).

Residues 72–99 (VAVPSGGAPAAATAAAEAPKGGDKAAAP) show a composition bias toward low complexity. Residues 72–121 (VAVPSGGAPAAATAAAEAPKGGDKAAAPPKEEKKEESEESDADMGFSPFD) form a disordered region.

Belongs to the eukaryotic ribosomal protein P1/P2 family. P1 and P2 exist as dimers at the large ribosomal subunit. In terms of processing, phosphorylated.

Its function is as follows. Plays an important role in the elongation step of protein synthesis. This is Large ribosomal subunit protein P2 from Taenia solium (Pork tapeworm).